Consider the following 241-residue polypeptide: Antimicrobial ginkbilobin-2-like protein (241 aa).

An N-terminal signal peptide occupies residues 1-23 (MLSSKYISVSFLLLSLSLHAVNC). Gnk2-homologous domains follow at residues 25–127 (DPLY…NIDF) and 133–238 (NKNK…LYPF). 4 cysteine pairs are disulfide-bonded: Cys-81-Cys-90, Cys-93-Cys-118, Cys-192-Cys-201, and Cys-204-Cys-229. The N-linked (GlcNAc...) asparagine glycan is linked to Asn-89.

It belongs to the cysteine-rich repeat secretory protein family.

The protein resides in the secreted. In terms of biological role, possesses antimicrobial activity toward the oomycete Phytophthora cinnamomi (ink disease agent), thus reducing its growth rate and confering an increased resistance to the plant. The polypeptide is Antimicrobial ginkbilobin-2-like protein (Castanea crenata (Japanese chestnut)).